Here is a 122-residue protein sequence, read N- to C-terminus: Protein FAM223B (122 aa).

The protein belongs to the FAM223 family.

The chain is Protein FAM223B (FAM223B) from Homo sapiens (Human).